The chain runs to 173 residues: MADERSKLEQAGEGTNFSSDEIDRLRKRFMKLDTDASGILETNEFLSLPGVAANPLASRLMDVFDENHSGDVDFQEFINGLSTFSTKGNKKEKLRFAFKVYDIDRDGYISNGELFIVLKMMVGNNLKDAQLQQIVDKTIMEADKDGDGKISFEEFEAQVGGTNVYQSMTLDLF.

EF-hand domains are found at residues 20–55 (DEID…AANP), 59–87 (RLMD…FSTK), 89–124 (NKKE…MVGN), and 130–165 (QLQQ…TNVY). Residues Asp-33, Asp-35, Ser-37, Glu-44, Asp-65, Asn-67, Ser-69, Asp-71, Glu-76, Asp-102, Asp-104, Asp-106, Tyr-108, Glu-113, Asp-143, Asp-145, Asp-147, Lys-149, and Glu-154 each contribute to the Ca(2+) site.

The protein belongs to the calcineurin regulatory subunit family. As to quaternary structure, composed of a catalytic subunit (A) and a regulatory subunit (B).

Functionally, regulatory subunit of calcineurin, a calcium-dependent, calmodulin stimulated protein phosphatase. Confers calcium sensitivity. The sequence is that of Calcineurin subunit B (CNB1) from Yarrowia lipolytica (strain CLIB 122 / E 150) (Yeast).